The chain runs to 220 residues: 7-cyano-7-deazaguanine synthase (220 aa).

10-20 contributes to the ATP binding site; that stretch reads FSGGQDSTTCL. Residues Cys186, Cys195, Cys198, and Cys201 each contribute to the Zn(2+) site.

This sequence belongs to the QueC family. In terms of assembly, homodimer. Requires Zn(2+) as cofactor.

The catalysed reaction is 7-carboxy-7-deazaguanine + NH4(+) + ATP = 7-cyano-7-deazaguanine + ADP + phosphate + H2O + H(+). Its pathway is purine metabolism; 7-cyano-7-deazaguanine biosynthesis. Its function is as follows. Catalyzes the ATP-dependent conversion of 7-carboxy-7-deazaguanine (CDG) to 7-cyano-7-deazaguanine (preQ(0)). This is 7-cyano-7-deazaguanine synthase from Bacillus cereus (strain B4264).